Reading from the N-terminus, the 425-residue chain is CinA-like protein (425 aa).

The protein belongs to the CinA family.

The chain is CinA-like protein from Desulfovibrio desulfuricans (strain ATCC 27774 / DSM 6949 / MB).